The sequence spans 185 residues: Orotate phosphoribosyltransferase (185 aa).

5-phospho-alpha-D-ribose 1-diphosphate contacts are provided by residues Arg-102, Lys-103, Lys-106, His-108, and 128 to 136; that span reads DDVITTGGS. Orotate is bound by residues Thr-132 and Arg-160.

It belongs to the purine/pyrimidine phosphoribosyltransferase family. PyrE subfamily. In terms of assembly, homodimer. Mg(2+) serves as cofactor.

The catalysed reaction is orotidine 5'-phosphate + diphosphate = orotate + 5-phospho-alpha-D-ribose 1-diphosphate. It functions in the pathway pyrimidine metabolism; UMP biosynthesis via de novo pathway; UMP from orotate: step 1/2. Catalyzes the transfer of a ribosyl phosphate group from 5-phosphoribose 1-diphosphate to orotate, leading to the formation of orotidine monophosphate (OMP). This Leptospira biflexa serovar Patoc (strain Patoc 1 / Ames) protein is Orotate phosphoribosyltransferase.